The sequence spans 153 residues: Ribosomal RNA large subunit methyltransferase H (153 aa).

Positions 71 and 102 each coordinate S-adenosyl-L-methionine.

The protein belongs to the RNA methyltransferase RlmH family. As to quaternary structure, homodimer.

The protein resides in the cytoplasm. It catalyses the reaction pseudouridine(1915) in 23S rRNA + S-adenosyl-L-methionine = N(3)-methylpseudouridine(1915) in 23S rRNA + S-adenosyl-L-homocysteine + H(+). Its function is as follows. Specifically methylates the pseudouridine at position 1915 (m3Psi1915) in 23S rRNA. The polypeptide is Ribosomal RNA large subunit methyltransferase H (Anaeromyxobacter dehalogenans (strain 2CP-1 / ATCC BAA-258)).